A 241-amino-acid polypeptide reads, in one-letter code: Uridylate kinase (241 aa).

15–18 (KMSG) contributes to the ATP binding site. Gly-57 is a UMP binding site. Gly-58 and Arg-62 together coordinate ATP. UMP-binding positions include Asp-77 and 138–145 (TGNPFFTT). ATP-binding residues include Thr-165, Tyr-171, and Asp-174.

This sequence belongs to the UMP kinase family. Homohexamer.

The protein resides in the cytoplasm. The enzyme catalyses UMP + ATP = UDP + ADP. Its pathway is pyrimidine metabolism; CTP biosynthesis via de novo pathway; UDP from UMP (UMPK route): step 1/1. Its activity is regulated as follows. Inhibited by UTP. Functionally, catalyzes the reversible phosphorylation of UMP to UDP. This chain is Uridylate kinase, found in Dichelobacter nodosus (strain VCS1703A).